We begin with the raw amino-acid sequence, 292 residues long: NAD kinase (292 aa).

Asp73 functions as the Proton acceptor in the catalytic mechanism. NAD(+)-binding positions include 73–74, 147–148, His158, Arg175, Asp177, 188–193, and Gln247; these read DG, NE, and TAYSLS.

This sequence belongs to the NAD kinase family. A divalent metal cation serves as cofactor.

Its subcellular location is the cytoplasm. The enzyme catalyses NAD(+) + ATP = ADP + NADP(+) + H(+). In terms of biological role, involved in the regulation of the intracellular balance of NAD and NADP, and is a key enzyme in the biosynthesis of NADP. Catalyzes specifically the phosphorylation on 2'-hydroxyl of the adenosine moiety of NAD to yield NADP. The protein is NAD kinase of Sodalis glossinidius (strain morsitans).